The primary structure comprises 64 residues: Conotoxin Pu5.2 (64 aa).

Positions 1 to 22 (MRCVPVFVILLLLIASTPSVDA) are cleaved as a signal peptide. The propeptide occupies 23–52 (RPNPKDDVPLASFHGADNANRILRTLWNLR). Residue I63 is modified to Isoleucine amide.

This sequence belongs to the conotoxin T superfamily. Contains 2 disulfide bonds that can be either 'C1-C3, C2-C4' or 'C1-C4, C2-C3', since these disulfide connectivities have been observed for conotoxins with cysteine framework V (for examples, see AC P0DQQ7 and AC P81755). Expressed by the venom duct.

It localises to the secreted. This chain is Conotoxin Pu5.2, found in Conus pulicarius (Flea-bitten cone).